Consider the following 202-residue polypeptide: Casparian strip membrane protein 1 (202 aa).

Residues 1–13 (MEKSESSTIQIAE) are compositionally biased toward polar residues. Positions 1 to 30 (MEKSESSTIQIAESSKDRKGKAPLLPPPVH) are disordered. Residues 1-42 (MEKSESSTIQIAESSKDRKGKAPLLPPPVHHERAAGYKRGVA) lie on the Cytoplasmic side of the membrane. Residues 43-63 (IFDLILRISAATAALAATIVM) traverse the membrane as a helical segment. Over 64 to 90 (GTTEQTLPFFTQFFQFRASYDDLPTFT) the chain is Extracellular. A helical transmembrane segment spans residues 91 to 111 (FFVIAMAIVTGYLILSVPFSI). The Cytoplasmic segment spans residues 112–130 (VCIARPVVAAPRILLILCD). A helical transmembrane segment spans residues 131 to 151 (TLTVTLATSAAGASAAIVYLA). Residues 152 to 177 (HNGXSDANWLAICQQFNDFCQRVSGA) are Extracellular-facing. A helical transmembrane segment spans residues 178–198 (VVAAFVSAVLLIFLVVLSAIV). The Cytoplasmic portion of the chain corresponds to 199–202 (LKKH).

It belongs to the Casparian strip membrane proteins (CASP) family. As to quaternary structure, homodimer and heterodimers.

It localises to the cell membrane. Functionally, regulates membrane-cell wall junctions and localized cell wall deposition. Required for establishment of the Casparian strip membrane domain (CSD) and the subsequent formation of Casparian strips, a cell wall modification of the root endodermis that determines an apoplastic barrier between the intraorganismal apoplasm and the extraorganismal apoplasm and prevents lateral diffusion. The protein is Casparian strip membrane protein 1 of Triphysaria pusilla (Dwarf owl's-clover).